Consider the following 193-residue polypeptide: Sarcoplasmic calcium-binding protein (193 aa).

EF-hand domains are found at residues 16 to 40 (MYDIDNNGYLDKNDFECLALRNTLI), 57 to 92 (IMSNLWNEIAELADFNKDGQVTVDEFKQAVQNLCCG), and 101 to 136 (CFKTVIGRLFKTIDINGDGLAGVDEYRLDCISRSAF). Ca(2+) contacts are provided by aspartate 18, aspartate 20, asparagine 22, tyrosine 24, aspartate 29, aspartate 70, asparagine 72, aspartate 74, glutamine 76, glutamate 81, aspartate 114, asparagine 116, aspartate 118, and glutamate 125.

In terms of assembly, monomer and dimer. As to expression, skeletal muscle (at protein level).

In terms of biological role, like parvalbumins, SCPs seem to be more abundant in fast contracting muscles, but no functional relationship can be established from this distribution. The polypeptide is Sarcoplasmic calcium-binding protein (Scylla paramamosain (Mud crab)).